We begin with the raw amino-acid sequence, 187 residues long: MIATRDDVCRQAGLQYGWLPHAFQAPRTLRGWLSDRGSLTQRLRSRYRDFRVLPVLRGVAAPFPDESGALGLARDASAYVRDVLLLGDGKARVFAHSVLPRAALRGGWNGIARLGTRPLGEALFRTPRVRRLAMTMRRVDARHPLYCAARRHAEVAERALWARRSVFCLDGHPLLVSEVFLPALLTP.

Positions 81, 119, and 178 each coordinate substrate.

The protein belongs to the UbiC family.

Its subcellular location is the cytoplasm. It catalyses the reaction chorismate = 4-hydroxybenzoate + pyruvate. Its pathway is cofactor biosynthesis; ubiquinone biosynthesis. Its function is as follows. Removes the pyruvyl group from chorismate, with concomitant aromatization of the ring, to provide 4-hydroxybenzoate (4HB) for the ubiquinone pathway. The polypeptide is Probable chorismate pyruvate-lyase (Thiobacillus denitrificans (strain ATCC 25259 / T1)).